The sequence spans 598 residues: UvrABC system protein C (598 aa).

A GIY-YIG domain is found at 14–91 (DSPGCYLHKD…IQKNMPKYNI (78 aa)). The UVR domain maps to 196–231 (DKIIEDLRSKMLAASEEMAFERAAEYRDLISGIATM).

Belongs to the UvrC family. In terms of assembly, interacts with UvrB in an incision complex.

It is found in the cytoplasm. The UvrABC repair system catalyzes the recognition and processing of DNA lesions. UvrC both incises the 5' and 3' sides of the lesion. The N-terminal half is responsible for the 3' incision and the C-terminal half is responsible for the 5' incision. The protein is UvrABC system protein C of Streptococcus pyogenes serotype M18 (strain MGAS8232).